Consider the following 427-residue polypeptide: Lactadherin (427 aa).

The first 22 residues, 1–22, serve as a signal peptide directing secretion; sequence MQFSRVLAALCGVLLCASGLFA. EGF-like domains lie at 24–61 and 64–108; these read SGDFCDSSLCLNGGTCLMGQDNDIYCLCPEGFTGLVCN and EKGP…IHCE. 3 disulfides stabilise this stretch: cysteine 28/cysteine 39, cysteine 33/cysteine 49, and cysteine 51/cysteine 60. The N-linked (GlcNAc...) asparagine glycan is linked to asparagine 61. 6 cysteine pairs are disulfide-bonded: cysteine 68-cysteine 79, cysteine 73-cysteine 96, cysteine 98-cysteine 107, cysteine 111-cysteine 267, cysteine 254-cysteine 258, and cysteine 272-cysteine 427. Residues 87–89 carry the Cell attachment site motif; that stretch reads RGD. 2 consecutive F5/8 type C domains span residues 111–267 and 272–427; these read CSTK…LLGC and CSEP…LLGC. The N-linked (GlcNAc...) asparagine glycan is linked to asparagine 230. N-linked (GlcNAc...) asparagine glycosylation is found at asparagine 280 and asparagine 390.

In terms of tissue distribution, spleen, lung, heart, brain and muscle.

The protein resides in the membrane. It is found in the secreted. The protein localises to the cytoplasmic vesicle. It localises to the secretory vesicle. Its subcellular location is the acrosome membrane. Its function is as follows. Contributes to phagocytic removal of apoptotic cells in many tissues. Plays an important role in the maintenance of intestinal epithelial homeostasis and the promotion of mucosal healing. Promotes VEGF-dependent neovascularization. Specific ligand for the alpha-v/beta-3 and alpha-v/beta-5 receptors. Also binds to phosphatidylserine-enriched cell surfaces in a receptor-independent manner. Zona pellucida-binding protein which may play a role in gamete interaction. Appears to participate in the O-acetylation of GD3 ganglioside sialic acid. This Rattus norvegicus (Rat) protein is Lactadherin (Mfge8).